The following is an 80-amino-acid chain: Metallothionein-like protein type 2, MT2-4/MT2-25 (80 aa).

It belongs to the metallothionein superfamily. Type 15 family.

Its function is as follows. Metallothioneins have a high content of cysteine residues that bind various heavy metals. The protein is Metallothionein-like protein type 2, MT2-4/MT2-25 of Brassica juncea (Indian mustard).